The chain runs to 162 residues: Selenoprotein F (162 aa).

Positions 1–28 (MAAGQGGWLRPALGLRLLLATAFQAVSA) are cleaved as a signal peptide. Position 93 (Sec93) is a non-standard amino acid, selenocysteine.

It belongs to the selenoprotein M/F family. In terms of assembly, forms a tight complex with UGGT1/UGCGL1. Interacts with UGGT2/UGCGL2. Interacts with RDH11. Highest levels in prostate, lower levels in brain, lung, thyroid gland, and large intestine.

It is found in the endoplasmic reticulum lumen. Functionally, may be involved in redox reactions associated with the formation of disulfide bonds. May contribute to the quality control of protein folding in the endoplasmic reticulum. May regulate protein folding by enhancing the catalytic activity of UGGT1/UGCGL1 and UGGT2/UGCGL2. The protein is Selenoprotein F of Rattus norvegicus (Rat).